A 101-amino-acid chain; its full sequence is Large ribosomal subunit protein bL28 (101 aa).

The protein belongs to the bacterial ribosomal protein bL28 family.

The sequence is that of Large ribosomal subunit protein bL28 from Rhodopseudomonas palustris (strain BisA53).